A 121-amino-acid polypeptide reads, in one-letter code: Small ribosomal subunit protein uS13 (121 aa).

The interval serine 94 to lysine 121 is disordered. Basic residues predominate over residues serine 106–lysine 121.

It belongs to the universal ribosomal protein uS13 family. Part of the 30S ribosomal subunit. Forms a loose heterodimer with protein S19. Forms two bridges to the 50S subunit in the 70S ribosome.

Functionally, located at the top of the head of the 30S subunit, it contacts several helices of the 16S rRNA. In the 70S ribosome it contacts the 23S rRNA (bridge B1a) and protein L5 of the 50S subunit (bridge B1b), connecting the 2 subunits; these bridges are implicated in subunit movement. Contacts the tRNAs in the A and P-sites. This Exiguobacterium sp. (strain ATCC BAA-1283 / AT1b) protein is Small ribosomal subunit protein uS13.